The primary structure comprises 342 residues: Ribosomal RNA small subunit methyltransferase C (342 aa).

It belongs to the methyltransferase superfamily. RsmC family. Monomer.

It is found in the cytoplasm. It catalyses the reaction guanosine(1207) in 16S rRNA + S-adenosyl-L-methionine = N(2)-methylguanosine(1207) in 16S rRNA + S-adenosyl-L-homocysteine + H(+). Functionally, specifically methylates the guanine in position 1207 of 16S rRNA in the 30S particle. This chain is Ribosomal RNA small subunit methyltransferase C, found in Shewanella sp. (strain MR-4).